The following is a 3797-amino-acid chain: A-kinase anchor protein 9 (3797 aa).

The tract at residues Met-1–Gln-140 is disordered. Polar residues-rich tracts occupy residues His-50–Arg-65 and Glu-92–Asn-108. A compositionally biased stretch (basic and acidic residues) spans Lys-115–Glu-124. Ser-139 carries the phosphoserine modification. 2 coiled-coil regions span residues Gln-140–Gln-607 and Ile-640–Asn-976. Ser-1288 carries the phosphoserine modification. Disordered stretches follow at residues Ser-1643–Ser-1668, Val-2323–Phe-2343, and Ser-2419–Thr-2454. Composition is skewed to basic and acidic residues over residues Asp-1648–Ser-1668 and Gln-2328–Phe-2343. Residues Ser-1808–Glu-2377 are a coiled coil. Residues Lys-2438 to Thr-2454 show a composition bias toward polar residues. The interval Asp-2498–Leu-2510 is PKA-RII subunit binding domain. 2 disordered regions span residues Leu-2604–Gly-2695 and Met-3271–Met-3296. The span at Glu-2606–Gly-2615 shows a compositional bias: acidic residues. The segment covering Pro-2642–Pro-2669 has biased composition (basic and acidic residues). Residues Leu-2975–Lys-3325 adopt a coiled-coil conformation. Residues Gln-3279 to Lys-3294 show a composition bias toward polar residues. Phosphoserine occurs at positions 3732, 3755, and 3787.

In terms of assembly, interacts with the regulatory region of protein kinase N (PKN), protein phosphatase 2A (PP2A), protein phosphatase 1 (PP1) and the immature non-phosphorylated form of PKC epsilon. Interacts with CIP4 and FNBP1. Interacts with chloride intracellular channel proteins CLIC1, CLIC4 and CLIC5. CSNK1D binding promotes its centrosomal subcellular location. Interacts with GM130/GOLGA2; leading to recruitment to the Golgi apparatus. Interacts with KCNQ1; targets protein kinase A (PKA) catalytic and regulatory subunits and protein phosphatase 1 (PP1), to the heterodimer KCNQ1-KCNE1. Interacts with PDE4DIP isoform 2; this interaction stabilizes both proteins. In complex with PDE4DIP isoform 2, recruits CAMSAP2 to the Golgi apparatus. Forms a pericentrosomal complex with CDK5RAP2, EB1/MAPRE1 and PDE4DIP isoform 2; within this complex, MAPRE1 binding to CDK5RAP2 may be mediated by PDE4DIP. Interacts with MAPRE1 and MAPRE3. Interacts (via C-terminus) with CAMSAP2; this interaction is much stronger in the presence of PDE4DIP isoform 2. Interacts with CAMSAP3. Interacts (via C-terminus) with the gamma-tubulin ring complex (gamma-TuRC), composed of gamma-tubulin, TUBGCP2, TUBGCP3, TUBGCP4, TUBGCP5 and TUBGCP6.

It is found in the golgi apparatus. It localises to the cytoplasm. Its subcellular location is the cytoskeleton. The protein resides in the microtubule organizing center. The protein localises to the centrosome. Scaffolding protein that assembles several protein kinases and phosphatases on the centrosome and Golgi apparatus. Required to maintain the integrity of the Golgi apparatus. Required for microtubule nucleation at the cis-side of the Golgi apparatus. Required for association of the centrosomes with the poles of the bipolar mitotic spindle during metaphase. In complex with PDE4DIP isoform 2/MMG8/SMYLE, recruits CAMSAP2 to the Golgi apparatus and tethers non-centrosomal minus-end microtubules to the Golgi, an important step for polarized cell movement. In complex with PDE4DIP isoform 2, EB1/MAPRE1 and CDK5RAP2, contributes to microtubules nucleation and extension also from the centrosome to the cell periphery. This Mus musculus (Mouse) protein is A-kinase anchor protein 9 (Akap9).